Consider the following 334-residue polypeptide: Transmembrane protein 41 homolog (334 aa).

The N-linked (GlcNAc...) asparagine glycan is linked to Asn-43. Residues 47–79 form a disordered region; sequence KNKNNNIDNKKNSNNNNNNNNNNNNKNSISNNN. N-linked (GlcNAc...) asparagine glycosylation occurs at Asn-83. Transmembrane regions (helical) follow at residues 97–117, 156–176, 192–214, 246–266, 269–289, and 305–325; these read LPLWLLVIVFGVSISVIVFLF, FIVITTFGVIYTFLQAFSIPG, VGFPLVCFVATLGATFSYLISYY, IVFLRITPFLPNWFINLASPL, VPIHTFAIGTFIGIMPATFLA, and IFDLKSILTMAALALLSILPT.

This sequence belongs to the TMEM41 family.

Its subcellular location is the membrane. This chain is Transmembrane protein 41 homolog, found in Dictyostelium discoideum (Social amoeba).